A 458-amino-acid polypeptide reads, in one-letter code: UDP-N-acetylmuramate--L-alanine ligase (458 aa).

115 to 121 (GSHGKTT) serves as a coordination point for ATP.

The protein belongs to the MurCDEF family.

The protein resides in the cytoplasm. It catalyses the reaction UDP-N-acetyl-alpha-D-muramate + L-alanine + ATP = UDP-N-acetyl-alpha-D-muramoyl-L-alanine + ADP + phosphate + H(+). Its pathway is cell wall biogenesis; peptidoglycan biosynthesis. In terms of biological role, cell wall formation. The sequence is that of UDP-N-acetylmuramate--L-alanine ligase from Anaeromyxobacter dehalogenans (strain 2CP-1 / ATCC BAA-258).